We begin with the raw amino-acid sequence, 1091 residues long: Sodium/potassium exporting P-type ATPase 5 (1091 aa).

The Cytoplasmic segment spans residues Met-1–Lys-63. Residues Ala-64–Ile-84 form a helical membrane-spanning segment. Residues Ser-85–Asp-90 lie on the Extracellular side of the membrane. The chain crosses the membrane as a helical span at residues Trp-91–Gln-111. The Cytoplasmic portion of the chain corresponds to Glu-112–Lys-282. Residues Leu-283–Ala-303 form a helical membrane-spanning segment. Residues Ser-304 to Arg-312 are Extracellular-facing. The chain crosses the membrane as a helical span at residues Val-313–Leu-333. Residues Thr-334 to Phe-815 lie on the Cytoplasmic side of the membrane. The active-site 4-aspartylphosphate intermediate is the Asp-369. Asp-369 and Thr-371 together coordinate Mg(2+). The ATP site is built by Thr-371 and Glu-483. A disordered region spans residues Ala-499–Gly-525. A compositionally biased stretch (polar residues) spans Glu-503–Gln-519. 7 residues coordinate ATP: Lys-561, Arg-606, Thr-673, Gly-674, Asp-675, Arg-732, and Lys-738. A Mg(2+)-binding site is contributed by Asp-757. Asn-760 lines the ATP pocket. A helical membrane pass occupies residues Val-816 to Phe-836. Residues Arg-837–Ser-848 are Extracellular-facing. A helical membrane pass occupies residues Pro-849–Leu-869. Over Glu-870–Glu-885 the chain is Cytoplasmic. The chain crosses the membrane as a helical span at residues Val-886–Gly-906. Over Ser-907–Arg-943 the chain is Extracellular. Residues Ser-944 to Met-964 form a helical membrane-spanning segment. Over Arg-965–Phe-991 the chain is Cytoplasmic. The helical transmembrane segment at Leu-992 to Ile-1012 threads the bilayer. Topologically, residues Asn-1013 to Pro-1021 are extracellular. Residues Ile-1022–Leu-1042 form a helical membrane-spanning segment. Residues Tyr-1043–His-1091 lie on the Cytoplasmic side of the membrane.

Belongs to the cation transport ATPase (P-type) (TC 3.A.3) family. Type IID subfamily. The cofactor is Mg(2+). In terms of processing, the active site is phosphorylated in presence of sodium or potassium and in conditions of higher pH. Not phosphorylated in presence of calcium ions.

The protein localises to the cell membrane. The catalysed reaction is Na(+)(in) + ATP + H2O = Na(+)(out) + ADP + phosphate + H(+). It catalyses the reaction K(+)(in) + ATP + H2O = K(+)(out) + ADP + phosphate + H(+). Its function is as follows. Catalyzes the hydrolysis of ATP coupled with the export of sodium and potassium from the cell. May export potassium less efficiently. May transport other cations such as lithium. Sodium/potassium efflux ATPases are involved in salt tolerance and maintaining the membrane potential across the plasma membrane in high salinity (Na+) or alkaline (K+) environments. The polypeptide is Sodium/potassium exporting P-type ATPase 5 (Saccharomyces cerevisiae (strain ATCC 204508 / S288c) (Baker's yeast)).